We begin with the raw amino-acid sequence, 777 residues long: Zinc finger FYVE domain-containing protein 1 (777 aa).

Residues 416-777 (MAHSSFFPDE…FNCNKKPGDL (362 aa)) form a required for localization in the lipid droplets region. 2 consecutive FYVE-type zinc fingers follow at residues 598 to 659 (NSQI…EARN) and 715 to 775 (DHEI…KKPG). Zn(2+) contacts are provided by Cys-604, Cys-607, Cys-620, Cys-623, Cys-628, Cys-631, Cys-651, Cys-654, Cys-721, Cys-724, Cys-737, Cys-740, Cys-745, Cys-748, Cys-767, and Cys-770.

As to quaternary structure, interacts with RAB18 (in GTP-bound form). Interacts with BSCL2 in a RAB18-dependent manner. Interacts with ZW10. (Microbial infection) Interacts with SARS coronavirus-2/SARS-CoV-2 non-structural protein 6 (nsp6); the interaction is independent of PtdIns3P-binding and leads to endoplasmic reticulum (ER) and double membrane vesicles (DMVs) binding to lipid droplets. Highly expressed in heart. Also detected in the testis. As to expression, expressed in all tissues examined, including, brain, placenta, lung, liver, skeletal muscle, pancreas and kidney. Highly expressed in heart.

It localises to the golgi apparatus. The protein resides in the golgi stack. It is found in the endoplasmic reticulum. Its subcellular location is the lipid droplet. The protein localises to the preautophagosomal structure. It localises to the mitochondrion. In terms of biological role, plays a role in the formation of lipid droplets (LDs) which are storage organelles at the center of lipid and energy homeostasis. Regulates the morphology, size and distribution of LDs. Mediates the formation of endoplasmic reticulum-lipid droplets (ER-LD) contacts by forming a complex with RAB18 and ZW10. Binds to phosphatidylinositol 3-phosphate (PtdIns3P) through FYVE-type zinc finger. Its function is as follows. (Microbial infection) Upon SARS coronavirus-2/SARS-CoV-2 infection, mediates through binding with non-structural protein 6 (nsp6) the replication organelle-lipid droplet association required to sustain viral replication. This Homo sapiens (Human) protein is Zinc finger FYVE domain-containing protein 1 (ZFYVE1).